Here is a 124-residue protein sequence, read N- to C-terminus: Putative transmembrane protein FLJ36131 (124 aa).

The Cytoplasmic segment spans residues 1–2 (MY). A helical membrane pass occupies residues 3 to 23 (VSISFLLGLSHLVLCCLLTFI). The Extracellular portion of the chain corresponds to 24–124 (VNFYLPPESI…LLTTTSYSVS (101 aa)). Residue Asn41 is glycosylated (N-linked (GlcNAc...) asparagine).

The protein resides in the membrane. In Homo sapiens (Human), this protein is Putative transmembrane protein FLJ36131.